Reading from the N-terminus, the 242-residue chain is Probable transcriptional regulatory protein NGO_1291 (242 aa).

The protein belongs to the TACO1 family.

Its subcellular location is the cytoplasm. This Neisseria gonorrhoeae (strain ATCC 700825 / FA 1090) protein is Probable transcriptional regulatory protein NGO_1291.